We begin with the raw amino-acid sequence, 330 residues long: Probable aldo-keto reductase 6 (330 aa).

Tyr-64 functions as the Proton donor in the catalytic mechanism. His-132 provides a ligand contact to substrate. NADP(+) is bound at residue Ser-211–Pro-221.

This sequence belongs to the aldo/keto reductase family.

This is Probable aldo-keto reductase 6 from Arabidopsis thaliana (Mouse-ear cress).